We begin with the raw amino-acid sequence, 572 residues long: Cytochrome P450 monooxygenase xilC (572 aa).

Position 515 (Cys-515) interacts with heme.

The protein belongs to the cytochrome P450 family. Requires heme as cofactor.

The protein operates within secondary metabolite biosynthesis. Its function is as follows. Cytochrome P450 monooxygenase; part of the gene cluster that mediates the biosynthesis of the 6-methyl-2-pyrone derivative xylariolide D. XilC hydroxylates the 5-alkyl-6-methyl-2-pyrone backbone called prexylariolide D, produced by the highly reducing polyketide synthase xilA, on its side chain to form xylariolide D. The polypeptide is Cytochrome P450 monooxygenase xilC (Penicillium crustosum (Blue mold fungus)).